A 473-amino-acid chain; its full sequence is Photosystem II CP43 reaction center protein (473 aa).

Positions 1 to 14 (MKTLYSLRRFYPVE) are excised as a propeptide. Thr15 carries the N-acetylthreonine modification. Phosphothreonine is present on Thr15. The next 5 membrane-spanning stretches (helical) occupy residues 69-93 (LFEVAHFVPEKPMYEQGLILLPHLA), 134-155 (LLGPETLEESFPFFGYVWKDRN), 178-200 (KALYFGGVYDTWAPGGGDVRKIT), 255-275 (KPFAWARRALVWSGEAYLSYS), and 291-312 (WFNNTAYPSEFYGPTGPEASQA). Residue Glu367 participates in [CaMn4O5] cluster binding. A helical membrane pass occupies residues 447-471 (RARAAAAGFEKGIDRDFEPALSMTP).

The protein belongs to the PsbB/PsbC family. PsbC subfamily. In terms of assembly, PSII is composed of 1 copy each of membrane proteins PsbA, PsbB, PsbC, PsbD, PsbE, PsbF, PsbH, PsbI, PsbJ, PsbK, PsbL, PsbM, PsbT, PsbX, PsbY, PsbZ, Psb30/Ycf12, at least 3 peripheral proteins of the oxygen-evolving complex and a large number of cofactors. It forms dimeric complexes. Binds multiple chlorophylls and provides some of the ligands for the Ca-4Mn-5O cluster of the oxygen-evolving complex. It may also provide a ligand for a Cl- that is required for oxygen evolution. PSII binds additional chlorophylls, carotenoids and specific lipids. serves as cofactor.

Its subcellular location is the plastid. It localises to the chloroplast thylakoid membrane. Its function is as follows. One of the components of the core complex of photosystem II (PSII). It binds chlorophyll and helps catalyze the primary light-induced photochemical processes of PSII. PSII is a light-driven water:plastoquinone oxidoreductase, using light energy to abstract electrons from H(2)O, generating O(2) and a proton gradient subsequently used for ATP formation. The sequence is that of Photosystem II CP43 reaction center protein from Oenothera argillicola (Appalachian evening primrose).